Here is a 25-residue protein sequence, read N- to C-terminus: uncharacterized protein (25 aa).

It is found in the plastid. The protein resides in the chloroplast. This is an uncharacterized protein from Trieres chinensis (Marine centric diatom).